The sequence spans 78 residues: Rubredoxin (78 aa).

One can recognise a Rubredoxin-like domain in the interval 23-74; the sequence is DARLECKICWWEYDPEVGDPVWQIAPGTSFSALPAHWRCPNCDGEAEQFMVL. Cys-28, Cys-31, Cys-61, and Cys-64 together coordinate Fe cation.

It belongs to the rubredoxin family. It depends on Fe(3+) as a cofactor.

Rubredoxin is a small nonheme, iron protein lacking acid-labile sulfide. Its single Fe, chelated to 4 Cys, functions as an electron acceptor and may also stabilize the conformation of the molecule. Could be involved in hydrogenase-linked redox processes. The polypeptide is Rubredoxin (hoxR) (Cupriavidus necator (strain ATCC 17699 / DSM 428 / KCTC 22496 / NCIMB 10442 / H16 / Stanier 337) (Ralstonia eutropha)).